A 485-amino-acid chain; its full sequence is Ribulose bisphosphate carboxylase large chain (485 aa).

The propeptide occupies 1-2 (MS). N-acetylproline is present on P3. Position 14 is an N6,N6,N6-trimethyllysine (K14). Substrate contacts are provided by N123 and T173. K175 serves as the catalytic Proton acceptor. K177 is a substrate binding site. Residues K201, D203, and E204 each contribute to the Mg(2+) site. K201 is modified (N6-carboxylysine). The Proton acceptor role is filled by H294. Residues R295, H327, and S379 each coordinate substrate.

Belongs to the RuBisCO large chain family. Type I subfamily. In terms of assembly, heterohexadecamer of 8 large chains and 8 small chains; disulfide-linked. The disulfide link is formed within the large subunit homodimers. Mg(2+) serves as cofactor. The disulfide bond which can form in the large chain dimeric partners within the hexadecamer appears to be associated with oxidative stress and protein turnover.

It localises to the plastid. The protein localises to the chloroplast. The enzyme catalyses 2 (2R)-3-phosphoglycerate + 2 H(+) = D-ribulose 1,5-bisphosphate + CO2 + H2O. It carries out the reaction D-ribulose 1,5-bisphosphate + O2 = 2-phosphoglycolate + (2R)-3-phosphoglycerate + 2 H(+). Its function is as follows. RuBisCO catalyzes two reactions: the carboxylation of D-ribulose 1,5-bisphosphate, the primary event in carbon dioxide fixation, as well as the oxidative fragmentation of the pentose substrate in the photorespiration process. Both reactions occur simultaneously and in competition at the same active site. This Helianthus annuus (Common sunflower) protein is Ribulose bisphosphate carboxylase large chain.